A 178-amino-acid polypeptide reads, in one-letter code: Bifunctional protein PyrR (178 aa).

The PRPP-binding signature appears at 99-111 (VILVDDVLFTGRT).

This sequence belongs to the purine/pyrimidine phosphoribosyltransferase family. PyrR subfamily. Homodimer and homohexamer; in equilibrium.

The enzyme catalyses UMP + diphosphate = 5-phospho-alpha-D-ribose 1-diphosphate + uracil. Functionally, regulates transcriptional attenuation of the pyrimidine nucleotide (pyr) operon by binding in a uridine-dependent manner to specific sites on pyr mRNA. This disrupts an antiterminator hairpin in the RNA and favors formation of a downstream transcription terminator, leading to a reduced expression of downstream genes. In terms of biological role, also displays a weak uracil phosphoribosyltransferase activity which is not physiologically significant. The protein is Bifunctional protein PyrR of Limosilactobacillus reuteri subsp. reuteri (strain JCM 1112) (Lactobacillus reuteri).